The sequence spans 418 residues: Putative ion-transport protein YfeO (418 aa).

A run of 12 helical transmembrane segments spans residues 10 to 30 (LLLS…LIVV), 54 to 74 (DSPL…GLVI), 99 to 119 (ALPG…SLGP), 120 to 140 (EHPI…RLLP), 149 to 169 (ILAS…AALI), 186 to 206 (LFAP…FFHP), 223 to 243 (ILSG…AVWC), 258 to 278 (VLVL…GGPV), 300 to 320 (DYFL…ASGF), 322 to 342 (GGRI…LHEH), 343 to 363 (VPAV…VLVV), and 371 to 391 (LFMA…CIVM).

It belongs to the chloride channel (TC 2.A.49) family.

Its subcellular location is the cell membrane. In Escherichia coli (strain 55989 / EAEC), this protein is Putative ion-transport protein YfeO.